We begin with the raw amino-acid sequence, 370 residues long: Flagellar P-ring protein (370 aa).

Residues 1–21 form the signal peptide; it reads MRLFSVVLAVFTLLLPSQAFA.

It belongs to the FlgI family. The basal body constitutes a major portion of the flagellar organelle and consists of four rings (L,P,S, and M) mounted on a central rod.

Its subcellular location is the periplasm. It is found in the bacterial flagellum basal body. Assembles around the rod to form the L-ring and probably protects the motor/basal body from shearing forces during rotation. This is Flagellar P-ring protein from Alteromonas mediterranea (strain DSM 17117 / CIP 110805 / LMG 28347 / Deep ecotype).